A 210-amino-acid chain; its full sequence is Nta operon transcriptional regulator (210 aa).

An HTH gntR-type domain is found at 1–55; sequence MAVSYHFRPGERINEVELAAQLKVSRTPLREALNRLTTEGFLTTTANKGFFARVL. The H-T-H motif DNA-binding region spans 15–34; it reads EVELAAQLKVSRTPLREALN.

Its function is as follows. Probable regulator for the expression of the NTA monooxygenase subunits. This is Nta operon transcriptional regulator (ntaR) from Aminobacter aminovorans (Chelatobacter heintzii).